We begin with the raw amino-acid sequence, 89 residues long: Small ribosomal subunit protein uS14A (89 aa).

The protein belongs to the universal ribosomal protein uS14 family. As to quaternary structure, part of the 30S ribosomal subunit. Contacts proteins S3 and S10.

Functionally, binds 16S rRNA, required for the assembly of 30S particles and may also be responsible for determining the conformation of the 16S rRNA at the A site. The polypeptide is Small ribosomal subunit protein uS14A (Streptococcus agalactiae serotype Ia (strain ATCC 27591 / A909 / CDC SS700)).